Reading from the N-terminus, the 512-residue chain is 2,3-bisphosphoglycerate-independent phosphoglycerate mutase (512 aa).

Mn(2+) contacts are provided by Asp-12 and Ser-62. Ser-62 functions as the Phosphoserine intermediate in the catalytic mechanism. Substrate-binding positions include His-123, 154–155 (RD), Arg-181, Arg-187, 253–256 (RPDR), and Lys-336. 5 residues coordinate Mn(2+): Asp-403, His-407, Asp-444, His-445, and His-462.

Belongs to the BPG-independent phosphoglycerate mutase family. Monomer. Mn(2+) is required as a cofactor.

The catalysed reaction is (2R)-2-phosphoglycerate = (2R)-3-phosphoglycerate. Its pathway is carbohydrate degradation; glycolysis; pyruvate from D-glyceraldehyde 3-phosphate: step 3/5. Its function is as follows. Catalyzes the interconversion of 2-phosphoglycerate and 3-phosphoglycerate. This chain is 2,3-bisphosphoglycerate-independent phosphoglycerate mutase, found in Aster yellows witches'-broom phytoplasma (strain AYWB).